The primary structure comprises 101 residues: Small ribosomal subunit protein uS14 (101 aa).

It belongs to the universal ribosomal protein uS14 family. Part of the 30S ribosomal subunit. Contacts proteins S3 and S10.

In terms of biological role, binds 16S rRNA, required for the assembly of 30S particles and may also be responsible for determining the conformation of the 16S rRNA at the A site. This is Small ribosomal subunit protein uS14 from Neisseria gonorrhoeae (strain ATCC 700825 / FA 1090).